The primary structure comprises 568 residues: Protein adenylyltransferase SelO, mitochondrial (568 aa).

Glycine 120, glycine 122, arginine 123, lysine 144, aspartate 156, glycine 157, arginine 208, and arginine 215 together coordinate ATP. Catalysis depends on aspartate 287, which acts as the Proton acceptor. Positions 288 and 297 each coordinate Mg(2+). Aspartate 297 lines the ATP pocket.

Belongs to the SELO family. Requires Mg(2+) as cofactor. In terms of processing, forms probably one or more intrachain disulfide bridges.

It localises to the mitochondrion. It catalyses the reaction L-tyrosyl-[protein] + ATP = O-(5'-adenylyl)-L-tyrosyl-[protein] + diphosphate. Catalyzes the transfer of adenosine 5'-monophosphate (AMP) to Tyr residues of target mitochondrial proteins (AMPylation). Involved in redox homeostasis by regulating the cellular response to oxidative stress. Regulates protein S-glutathionylation levels possibly by AMPylation of deglutathionylation enzymes such as glutaredoxins. This is Protein adenylyltransferase SelO, mitochondrial from Schizosaccharomyces pombe (strain 972 / ATCC 24843) (Fission yeast).